Reading from the N-terminus, the 253-residue chain is Shikimate dehydrogenase (NADP(+)) (253 aa).

Shikimate-binding positions include 13 to 15 (SIS) and Thr59. Lys63 serves as the catalytic Proton acceptor. Residue Glu74 participates in NADP(+) binding. The shikimate site is built by Asn83 and Asp94. Residues 115 to 119 (GAGGA), 139 to 144 (NRTIER), and Val199 each bind NADP(+). Tyr201 provides a ligand contact to shikimate. Gly221 provides a ligand contact to NADP(+).

It belongs to the shikimate dehydrogenase family. Homodimer.

It catalyses the reaction shikimate + NADP(+) = 3-dehydroshikimate + NADPH + H(+). It functions in the pathway metabolic intermediate biosynthesis; chorismate biosynthesis; chorismate from D-erythrose 4-phosphate and phosphoenolpyruvate: step 4/7. Involved in the biosynthesis of the chorismate, which leads to the biosynthesis of aromatic amino acids. Catalyzes the reversible NADPH linked reduction of 3-dehydroshikimate (DHSA) to yield shikimate (SA). The sequence is that of Shikimate dehydrogenase (NADP(+)) from Thermotoga maritima (strain ATCC 43589 / DSM 3109 / JCM 10099 / NBRC 100826 / MSB8).